The sequence spans 473 residues: Adenosylhomocysteinase (473 aa).

The substrate site is built by Thr64, Asp139, and Glu199. Position 200-202 (Thr200–Thr202) interacts with NAD(+). Lys229 and Asp233 together coordinate substrate. NAD(+)-binding positions include Asn234, Gly263–Gly268, Glu286, Asn321, Ile342–His344, and Asn387.

Belongs to the adenosylhomocysteinase family. The cofactor is NAD(+).

The protein localises to the cytoplasm. The catalysed reaction is S-adenosyl-L-homocysteine + H2O = L-homocysteine + adenosine. It functions in the pathway amino-acid biosynthesis; L-homocysteine biosynthesis; L-homocysteine from S-adenosyl-L-homocysteine: step 1/1. In terms of biological role, may play a key role in the regulation of the intracellular concentration of adenosylhomocysteine. The protein is Adenosylhomocysteinase of Paraburkholderia phytofirmans (strain DSM 17436 / LMG 22146 / PsJN) (Burkholderia phytofirmans).